The chain runs to 73 residues: Homeodomain-only protein (73 aa).

The segment at residues 3–62 is a DNA-binding region (homeobox; degenerate); it reads TETASGPTEDQVEILEYNFNKVNKHPDPTTLCLIAAEAGLSEEETQKWFKQRLAQWRRSE.

As to quaternary structure, interacts with serum response factor (SRF). Component of a large complex containing histone deacetylases such as HDAC2. Interacts with the acetylated forms of HSPA1A and HSPA1B. Interacts with HSPA8.

Its subcellular location is the nucleus. The protein localises to the cytoplasm. In terms of biological role, atypical homeodomain protein which does not bind DNA and is required to modulate cardiac growth and development. Acts via its interaction with SRF, thereby modulating the expression of SRF-dependent cardiac-specific genes and cardiac development. Prevents SRF-dependent transcription either by inhibiting SRF binding to DNA or by recruiting histone deacetylase (HDAC) proteins that prevent transcription by SRF. Overexpression causes cardiac hypertrophy. Acts as a co-chaperone for HSPA1A and HSPA1B chaperone proteins and assists in chaperone-mediated protein refolding. In Bos taurus (Bovine), this protein is Homeodomain-only protein (HOPX).